The chain runs to 223 residues: Deoxyribose-phosphate aldolase 2 (223 aa).

The active-site Proton donor/acceptor is the D89. Residue K152 is the Schiff-base intermediate with acetaldehyde of the active site. The active-site Proton donor/acceptor is the K181.

This sequence belongs to the DeoC/FbaB aldolase family. DeoC type 1 subfamily.

It is found in the cytoplasm. It carries out the reaction 2-deoxy-D-ribose 5-phosphate = D-glyceraldehyde 3-phosphate + acetaldehyde. The protein operates within carbohydrate degradation; 2-deoxy-D-ribose 1-phosphate degradation; D-glyceraldehyde 3-phosphate and acetaldehyde from 2-deoxy-alpha-D-ribose 1-phosphate: step 2/2. Functionally, catalyzes a reversible aldol reaction between acetaldehyde and D-glyceraldehyde 3-phosphate to generate 2-deoxy-D-ribose 5-phosphate. This chain is Deoxyribose-phosphate aldolase 2, found in Bacillus licheniformis (strain ATCC 14580 / DSM 13 / JCM 2505 / CCUG 7422 / NBRC 12200 / NCIMB 9375 / NCTC 10341 / NRRL NRS-1264 / Gibson 46).